A 750-amino-acid chain; its full sequence is Photosystem I P700 chlorophyll a apoprotein A1 (750 aa).

Transmembrane regions (helical) follow at residues 70 to 93, 156 to 179, 195 to 219, 291 to 309, 346 to 369, 385 to 411, 433 to 455, and 531 to 549; these read VFSA…FHGA, LYCT…FHYH, LNHH…HVSL, IAHH…GHMY, WHAQ…HHMY, LSLF…IFMV, AIIS…LYIH, and FLVH…LILL. [4Fe-4S] cluster is bound by residues Cys573 and Cys582. 2 consecutive transmembrane segments (helical) span residues 589 to 610 and 664 to 686; these read HVFL…HFSW and LSAY…MFLF. His675 is a binding site for chlorophyll a'. Residues Met683 and Tyr691 each coordinate chlorophyll a. Position 692 (Trp692) interacts with phylloquinone. A helical membrane pass occupies residues 724 to 744; the sequence is AVGVTHYLLGGIATTWAFFLA.

It belongs to the PsaA/PsaB family. In terms of assembly, the PsaA/B heterodimer binds the P700 chlorophyll special pair and subsequent electron acceptors. PSI consists of a core antenna complex that captures photons, and an electron transfer chain that converts photonic excitation into a charge separation. The eukaryotic PSI reaction center is composed of at least 11 subunits. P700 is a chlorophyll a/chlorophyll a' dimer, A0 is one or more chlorophyll a, A1 is one or both phylloquinones and FX is a shared 4Fe-4S iron-sulfur center. is required as a cofactor.

The protein resides in the plastid. The protein localises to the chloroplast thylakoid membrane. It catalyses the reaction reduced [plastocyanin] + hnu + oxidized [2Fe-2S]-[ferredoxin] = oxidized [plastocyanin] + reduced [2Fe-2S]-[ferredoxin]. In terms of biological role, psaA and PsaB bind P700, the primary electron donor of photosystem I (PSI), as well as the electron acceptors A0, A1 and FX. PSI is a plastocyanin-ferredoxin oxidoreductase, converting photonic excitation into a charge separation, which transfers an electron from the donor P700 chlorophyll pair to the spectroscopically characterized acceptors A0, A1, FX, FA and FB in turn. Oxidized P700 is reduced on the lumenal side of the thylakoid membrane by plastocyanin. This chain is Photosystem I P700 chlorophyll a apoprotein A1, found in Liriodendron tulipifera (Tuliptree).